Consider the following 354-residue polypeptide: Uroporphyrinogen decarboxylase (354 aa).

Residues 27 to 31 (RRAGR), phenylalanine 46, aspartate 77, tyrosine 154, threonine 209, and histidine 327 contribute to the substrate site.

It belongs to the uroporphyrinogen decarboxylase family. As to quaternary structure, homodimer.

It localises to the cytoplasm. It carries out the reaction uroporphyrinogen III + 4 H(+) = coproporphyrinogen III + 4 CO2. Its pathway is porphyrin-containing compound metabolism; protoporphyrin-IX biosynthesis; coproporphyrinogen-III from 5-aminolevulinate: step 4/4. Its function is as follows. Catalyzes the decarboxylation of four acetate groups of uroporphyrinogen-III to yield coproporphyrinogen-III. The polypeptide is Uroporphyrinogen decarboxylase (Salmonella typhimurium (strain LT2 / SGSC1412 / ATCC 700720)).